The chain runs to 109 residues: Thioredoxin (109 aa).

In terms of domain architecture, Thioredoxin spans 2–109 (TNCIVELTDG…LKDFLNLYLK (108 aa)). Cys33 and Cys36 form a disulfide bridge.

It belongs to the thioredoxin family.

Functionally, participates in various redox reactions through the reversible oxidation of its active center dithiol to a disulfide and catalyzes dithiol-disulfide exchange reactions. This is Thioredoxin (trxA) from Buchnera aphidicola subsp. Baizongia pistaciae (strain Bp).